We begin with the raw amino-acid sequence, 189 residues long: UPF0301 protein PFL_5830 (189 aa).

It belongs to the UPF0301 (AlgH) family.

This Pseudomonas fluorescens (strain ATCC BAA-477 / NRRL B-23932 / Pf-5) protein is UPF0301 protein PFL_5830.